Here is a 430-residue protein sequence, read N- to C-terminus: Histidinol dehydrogenase (430 aa).

3 residues coordinate NAD(+): Tyr-130, Gln-191, and Asn-214. 3 residues coordinate substrate: Ser-237, Gln-259, and His-262. Positions 259 and 262 each coordinate Zn(2+). Catalysis depends on proton acceptor residues Glu-327 and His-328. Substrate contacts are provided by His-328, Asp-361, Glu-415, and His-420. Asp-361 lines the Zn(2+) pocket. Residue His-420 coordinates Zn(2+).

The protein belongs to the histidinol dehydrogenase family. Zn(2+) serves as cofactor.

It carries out the reaction L-histidinol + 2 NAD(+) + H2O = L-histidine + 2 NADH + 3 H(+). It participates in amino-acid biosynthesis; L-histidine biosynthesis; L-histidine from 5-phospho-alpha-D-ribose 1-diphosphate: step 9/9. Its function is as follows. Catalyzes the sequential NAD-dependent oxidations of L-histidinol to L-histidinaldehyde and then to L-histidine. The chain is Histidinol dehydrogenase from Brucella melitensis biotype 1 (strain ATCC 23456 / CCUG 17765 / NCTC 10094 / 16M).